The following is a 225-amino-acid chain: Uracil-DNA glycosylase (225 aa).

D65 (proton acceptor) is an active-site residue.

This sequence belongs to the uracil-DNA glycosylase (UDG) superfamily. UNG family.

It localises to the cytoplasm. The enzyme catalyses Hydrolyzes single-stranded DNA or mismatched double-stranded DNA and polynucleotides, releasing free uracil.. In terms of biological role, excises uracil residues from the DNA which can arise as a result of misincorporation of dUMP residues by DNA polymerase or due to deamination of cytosine. This Bacillus cereus (strain ATCC 10987 / NRS 248) protein is Uracil-DNA glycosylase.